The primary structure comprises 200 residues: 3-isopropylmalate dehydratase small subunit (200 aa).

It belongs to the LeuD family. LeuD type 1 subfamily. In terms of assembly, heterodimer of LeuC and LeuD.

It catalyses the reaction (2R,3S)-3-isopropylmalate = (2S)-2-isopropylmalate. The protein operates within amino-acid biosynthesis; L-leucine biosynthesis; L-leucine from 3-methyl-2-oxobutanoate: step 2/4. Its function is as follows. Catalyzes the isomerization between 2-isopropylmalate and 3-isopropylmalate, via the formation of 2-isopropylmaleate. This Pseudarthrobacter chlorophenolicus (strain ATCC 700700 / DSM 12829 / CIP 107037 / JCM 12360 / KCTC 9906 / NCIMB 13794 / A6) (Arthrobacter chlorophenolicus) protein is 3-isopropylmalate dehydratase small subunit.